The following is a 328-amino-acid chain: Small ribosomal subunit protein bS1A (328 aa).

S1 motif domains are found at residues 31–100, 118–182, and 196–264; these read GDIV…LSIR, DATV…LSHR, and AQVV…LSTK. Residues 298-328 are disordered; that stretch reads EAQGIPYEPPTSVDDTDDEEDESLAVSAVDE. The segment covering 311-328 has biased composition (acidic residues); sequence DDTDDEEDESLAVSAVDE.

This sequence belongs to the bacterial ribosomal protein bS1 family.

Its function is as follows. Binds mRNA. The polypeptide is Small ribosomal subunit protein bS1A (rps1A) (Synechocystis sp. (strain ATCC 27184 / PCC 6803 / Kazusa)).